The following is a 171-amino-acid chain: Protein phosphatase 1 regulatory subunit 1A (171 aa).

Methionine 1 bears the N-acetylmethionine mark. Residues methionine 1 to valine 171 form a disordered region. Residues lysine 9 to phenylalanine 12 are essential for activity. Over residues proline 19–isoleucine 29 the composition is skewed to basic and acidic residues. Threonine 35 carries the post-translational modification Phosphothreonine. The interval threonine 42 to arginine 54 is essential for activity. 4 positions are modified to phosphoserine: serine 43, serine 46, serine 47, and serine 67. A compositionally biased stretch (polar residues) spans glycine 122–glutamine 146. An interaction with PPP1R15A region spans residues threonine 143–valine 171.

Belongs to the protein phosphatase inhibitor 1 family. As to quaternary structure, interacts with PPP1R15A. Post-translationally, phosphorylation of Thr-35 is required for activity.

In terms of biological role, inhibitor of protein-phosphatase 1. This protein may be important in hormonal control of glycogen metabolism. Hormones that elevate intracellular cAMP increase I-1 activity in many tissues. I-1 activation may impose cAMP control over proteins that are not directly phosphorylated by PKA. Following a rise in intracellular calcium, I-1 is inactivated by calcineurin (or PP2B). Does not inhibit type-2 phosphatases. The chain is Protein phosphatase 1 regulatory subunit 1A (Ppp1r1a) from Mus musculus (Mouse).